Consider the following 410-residue polypeptide: MKFASTFAGFFATRRENGGTQTSRAVDRLMRPADSLRELDPLLIWSATGLLLIGLVMVYSSSIATAEGSRFTGHQSHYFLLRHAMFLAVGIGAGLAAFQLSMRQWQRFAPWLFLIGVMLLVVVLIPGVGREVNGAQRWLPLGPLNLQPSELMKLFVALYAADYTVRKLPDMGSFRRGFLPMAAMILLVGFLLLGEPDFGAFVVITAIAFGVLFLGGINVRVFALLALVAVIGFMLLIWLSPYRRDRIFGFMDPWQDAFGKGYQLSHALIAFGRGEWFGVGLGASVEKLFYLPEAHTDFLLAVIAEELGFAGVLTVIALFAILIHRALVLGREAVKLERYFSGLVAMGIGLWLGVQSFINMGVNMGLLPTKGLTLPLMSFGGSGIVANCLALAILLRVDWEVRQLKRGCGA.

9 helical membrane-spanning segments follow: residues 39 to 59 (LDPL…VMVY), 78 to 98 (YFLL…LAAF), 108 to 128 (FAPW…IPGV), 177 to 197 (GFLP…GEPD), 198 to 218 (FGAF…GGIN), 221 to 241 (VFAL…WLSP), 303 to 323 (IAEE…AILI), 342 to 362 (GLVA…NMGV), and 374 to 394 (LPLM…LAIL).

Belongs to the SEDS family. FtsW subfamily.

It is found in the cell inner membrane. It carries out the reaction [GlcNAc-(1-&gt;4)-Mur2Ac(oyl-L-Ala-gamma-D-Glu-L-Lys-D-Ala-D-Ala)](n)-di-trans,octa-cis-undecaprenyl diphosphate + beta-D-GlcNAc-(1-&gt;4)-Mur2Ac(oyl-L-Ala-gamma-D-Glu-L-Lys-D-Ala-D-Ala)-di-trans,octa-cis-undecaprenyl diphosphate = [GlcNAc-(1-&gt;4)-Mur2Ac(oyl-L-Ala-gamma-D-Glu-L-Lys-D-Ala-D-Ala)](n+1)-di-trans,octa-cis-undecaprenyl diphosphate + di-trans,octa-cis-undecaprenyl diphosphate + H(+). It participates in cell wall biogenesis; peptidoglycan biosynthesis. Functionally, peptidoglycan polymerase that is essential for cell division. In Aromatoleum aromaticum (strain DSM 19018 / LMG 30748 / EbN1) (Azoarcus sp. (strain EbN1)), this protein is Probable peptidoglycan glycosyltransferase FtsW.